A 505-amino-acid polypeptide reads, in one-letter code: Tyrosine-protein kinase Blk (505 aa).

A disordered region spans residues 1–37; that stretch reads MGLVSSKKPDKEKPIKEKDKGQWSPLKVSAQDKDAPP. A lipid anchor (N-myristoyl glycine) is attached at Gly2. The span at 7–21 shows a compositional bias: basic and acidic residues; the sequence is KKPDKEKPIKEKDKG. In terms of domain architecture, SH3 spans 58–118; that stretch reads EDKHFVVALY…PSNFVARVES (61 aa). In terms of domain architecture, SH2 spans 124-220; that stretch reads WFFRSQGRKE…GLCQRLTLPC (97 aa). In terms of domain architecture, Protein kinase spans 241 to 494; that stretch reads LRLVRKLGSG…FLQSVLEDFY (254 aa). ATP contacts are provided by residues 247-255 and Lys269; that span reads LGSGQFGEV. Residue Asp360 is the Proton acceptor of the active site. The residue at position 389 (Tyr389) is a Phosphotyrosine; by autocatalysis.

Belongs to the protein kinase superfamily. Tyr protein kinase family. SRC subfamily. As to quaternary structure, interacts with CBL (via SH2 domain). Interacts with CD79A and CD79B (via SH2 domain). Post-translationally, phosphorylated on tyrosine residues after antibody-mediated surface engagement of the B-cell antigen receptor (BCR). In terms of processing, ubiquitination of activated BLK by the UBE3A ubiquitin protein ligase leads to its degradation by the ubiquitin-proteasome pathway. In terms of tissue distribution, expressed in lymphatic organs, pancreatic islets, Leydig cells, striate ducts of salivary glands and hair follicles.

It localises to the cell membrane. It carries out the reaction L-tyrosyl-[protein] + ATP = O-phospho-L-tyrosyl-[protein] + ADP + H(+). With respect to regulation, antibody-mediated surface engagement of the B-cell antigen receptor (BCR) which results in the phosphorylation of BLK on tyrosine residues, stimulates the enzymatic activity. In terms of biological role, non-receptor tyrosine kinase involved in B-lymphocyte development, differentiation and signaling. B-cell receptor (BCR) signaling requires a tight regulation of several protein tyrosine kinases and phosphatases, and associated coreceptors. Binding of antigen to the B-cell antigen receptor (BCR) triggers signaling that ultimately leads to B-cell activation. Signaling through BLK plays an important role in transmitting signals through surface immunoglobulins and supports the pro-B to pre-B transition, as well as the signaling for growth arrest and apoptosis downstream of B-cell receptor. Specifically binds and phosphorylates CD79A at 'Tyr-188'and 'Tyr-199', as well as CD79B at 'Tyr-196' and 'Tyr-207'. Also phosphorylates the immunoglobulin G receptors FCGR2A, FCGR2B and FCGR2C. With FYN and LYN, plays an essential role in pre-B-cell receptor (pre-BCR)-mediated NF-kappa-B activation. Also contributes to BTK activation by indirectly stimulating BTK intramolecular autophosphorylation. In pancreatic islets, acts as a modulator of beta-cells function through the up-regulation of PDX1 and NKX6-1 and consequent stimulation of insulin secretion in response to glucose. Phosphorylates CGAS, promoting retention of CGAS in the cytosol. The polypeptide is Tyrosine-protein kinase Blk (BLK) (Homo sapiens (Human)).